The primary structure comprises 834 residues: Periplasmic nitrate reductase (834 aa).

Positions 1–29 (MNLTRREFAKANAAAIAAAAAGLPILVRA) form a signal peptide, tat-type signal. The 4Fe-4S Mo/W bis-MGD-type domain occupies 41-97 (LVWNKAPCRFCGTGCSVMVATRDGQVVATHGDIKAEVNRGINCVKGYFLSKIMYGSD). [4Fe-4S] cluster is bound by residues Cys-48, Cys-51, Cys-55, and Cys-83. Residues Lys-85, Gln-152, Asn-177, Cys-181, 214–221 (WGSNMAEM), 245–249 (STFEH), 264–266 (QTD), Met-375, Gln-379, Asn-485, 511–512 (SD), Lys-534, Asp-561, and 721–730 (TGRVLEHWHT) each bind Mo-bis(molybdopterin guanine dinucleotide). Phe-797 provides a ligand contact to substrate. Mo-bis(molybdopterin guanine dinucleotide) contacts are provided by Asn-805 and Lys-822.

It belongs to the prokaryotic molybdopterin-containing oxidoreductase family. NasA/NapA/NarB subfamily. As to quaternary structure, component of the periplasmic nitrate reductase NapAB complex composed of NapA and NapB. [4Fe-4S] cluster is required as a cofactor. Requires Mo-bis(molybdopterin guanine dinucleotide) as cofactor. Post-translationally, predicted to be exported by the Tat system. The position of the signal peptide cleavage has not been experimentally proven.

It localises to the periplasm. The catalysed reaction is 2 Fe(II)-[cytochrome] + nitrate + 2 H(+) = 2 Fe(III)-[cytochrome] + nitrite + H2O. Its function is as follows. Catalytic subunit of the periplasmic nitrate reductase complex NapAB. Receives electrons from NapB and catalyzes the reduction of nitrate to nitrite. In Pseudomonas aeruginosa (strain UCBPP-PA14), this protein is Periplasmic nitrate reductase.